The following is an 808-amino-acid chain: Probable inorganic carbon transporter subunit DabA (808 aa).

The Zn(2+) site is built by Cys-334, Asp-336, His-494, and Cys-509.

Belongs to the inorganic carbon transporter (TC 9.A.2) DabA family. As to quaternary structure, forms a complex with DabB. It depends on Zn(2+) as a cofactor.

It is found in the cell inner membrane. In terms of biological role, part of an energy-coupled inorganic carbon pump. The chain is Probable inorganic carbon transporter subunit DabA from Allorhizobium ampelinum (strain ATCC BAA-846 / DSM 112012 / S4) (Agrobacterium vitis (strain S4)).